A 629-amino-acid polypeptide reads, in one-letter code: DNA-directed RNA polymerase subunit beta' (629 aa).

Zn(2+)-binding residues include Cys70, Cys72, Cys85, and Cys88. Positions 472, 474, and 476 each coordinate Mg(2+).

Belongs to the RNA polymerase beta' chain family. RpoC1 subfamily. In plastids the minimal PEP RNA polymerase catalytic core is composed of four subunits: alpha, beta, beta', and beta''. When a (nuclear-encoded) sigma factor is associated with the core the holoenzyme is formed, which can initiate transcription. Requires Mg(2+) as cofactor. It depends on Zn(2+) as a cofactor.

The protein localises to the plastid. Its subcellular location is the chloroplast. The catalysed reaction is RNA(n) + a ribonucleoside 5'-triphosphate = RNA(n+1) + diphosphate. DNA-dependent RNA polymerase catalyzes the transcription of DNA into RNA using the four ribonucleoside triphosphates as substrates. This Porphyra purpurea (Red seaweed) protein is DNA-directed RNA polymerase subunit beta'.